Here is a 242-residue protein sequence, read N- to C-terminus: Urease accessory protein UreF (242 aa).

It belongs to the UreF family. As to quaternary structure, ureD, UreF and UreG form a complex that acts as a GTP-hydrolysis-dependent molecular chaperone, activating the urease apoprotein by helping to assemble the nickel containing metallocenter of UreC. The UreE protein probably delivers the nickel.

It localises to the cytoplasm. Functionally, required for maturation of urease via the functional incorporation of the urease nickel metallocenter. This is Urease accessory protein UreF from Bradyrhizobium diazoefficiens (strain JCM 10833 / BCRC 13528 / IAM 13628 / NBRC 14792 / USDA 110).